The chain runs to 119 residues: Chorion class CA protein ERA.1 (119 aa).

Positions 1–21 are cleaved as a signal peptide; the sequence is MSTFAVLLLCVQACLIQNVYS. The segment at 22–55 is left arm; sequence QCLGRVGPGGPPLGPYGGPLGGPGYGPVGYGGCG. Residues 56–103 form a central domain region; that stretch reads GYGGSGIGNVAVAGELPVAGSTGVMGQVPVIGAVEFAGPACAVGSVSI. A right arm region spans residues 104-119; that stretch reads SGACGPTCGCGGSPYY.

The protein belongs to the chorion protein family.

In terms of biological role, this protein is one of many from the eggshell of the silk moth. The protein is Chorion class CA protein ERA.1 (ERA.1) of Bombyx mori (Silk moth).